A 656-amino-acid polypeptide reads, in one-letter code: Pumilio homology domain family member 6 (656 aa).

Residues 1 to 107 (MAPLTKKTNG…GGENGNHTEQ (107 aa)) are disordered. A compositionally biased stretch (basic and acidic residues) spans 13 to 23 (SAKEVSHSEKK). Residues Ser-31, Ser-34, and Ser-35 each carry the phosphoserine; by CK2 modification. 2 positions are modified to phosphoserine: Ser-34 and Ser-35. Acidic residues predominate over residues 52–89 (SDDDDLDDLSTSDSEAEEEADELDISDDSEEHENENEE). Residues 90 to 107 (KEGKDKSEGGENGNHTEQ) show a composition bias toward basic and acidic residues. Residues 133–483 (RLRVKTPPLP…ELLSKFAPMF (351 aa)) enclose the PUM-HD domain. Pumilio repeat units follow at residues 155–191 (ELSK…QIVD), 192–227 (ALKG…TIIN), 228–264 (ELHG…QMIK), 340–376 (ELLH…LILK), 377–413 (ALKN…KTFS), and 415–450 (TVKE…PIVK).

It belongs to the PUF6 family. In terms of assembly, component of the ASH1 mRNP composed of at least PUF6, SHE2, SHE3, SHE1 and the ASH1 mRNA. Interacts with SHE2 and FUN12. Phosphorylation by CK2 relieves translational repression activity.

It is found in the bud tip. Its subcellular location is the nucleus. The protein resides in the nucleolus. In terms of biological role, RNA-binding protein involved in post-transcriptional regulation. Component of the ASH1 mRNP which transports the ASH1 mRNA to the distal tip of the bud, where the ASH1 protein is translated and targeted to the daughter cell nucleus. Binds to the ASH1 3'-UTR containing the PUF consensus UUGU segment and represses its translation. This silencing of ASH1 mRNA is critical for asymmetric seggregation of ASH1 to the daughter cell nucleus. The chain is Pumilio homology domain family member 6 (PUF6) from Saccharomyces cerevisiae (strain ATCC 204508 / S288c) (Baker's yeast).